The chain runs to 155 residues: Putative pre-16S rRNA nuclease (155 aa).

Belongs to the YqgF nuclease family.

The protein resides in the cytoplasm. In terms of biological role, could be a nuclease involved in processing of the 5'-end of pre-16S rRNA. The polypeptide is Putative pre-16S rRNA nuclease (Xanthomonas euvesicatoria pv. vesicatoria (strain 85-10) (Xanthomonas campestris pv. vesicatoria)).